Here is a 186-residue protein sequence, read N- to C-terminus: ATP synthase subunit b (186 aa).

A helical membrane pass occupies residues 28-48 (IVWSIIPFAVILFVFAKVVLP).

It belongs to the ATPase B chain family. In terms of assembly, F-type ATPases have 2 components, F(1) - the catalytic core - and F(0) - the membrane proton channel. F(1) has five subunits: alpha(3), beta(3), gamma(1), delta(1), epsilon(1). F(0) has three main subunits: a(1), b(2) and c(10-14). The alpha and beta chains form an alternating ring which encloses part of the gamma chain. F(1) is attached to F(0) by a central stalk formed by the gamma and epsilon chains, while a peripheral stalk is formed by the delta and b chains.

It localises to the cell membrane. F(1)F(0) ATP synthase produces ATP from ADP in the presence of a proton or sodium gradient. F-type ATPases consist of two structural domains, F(1) containing the extramembraneous catalytic core and F(0) containing the membrane proton channel, linked together by a central stalk and a peripheral stalk. During catalysis, ATP synthesis in the catalytic domain of F(1) is coupled via a rotary mechanism of the central stalk subunits to proton translocation. In terms of biological role, component of the F(0) channel, it forms part of the peripheral stalk, linking F(1) to F(0). This chain is ATP synthase subunit b, found in Corynebacterium urealyticum (strain ATCC 43042 / DSM 7109).